Reading from the N-terminus, the 580-residue chain is Protein O-linked-mannose beta-1,4-N-acetylglucosaminyltransferase 2 (580 aa).

The Cytoplasmic portion of the chain corresponds to 1-4 (MHLS). The chain crosses the membrane as a helical; Signal-anchor for type II membrane protein span at residues 5–25 (AVFNALLVSVLAAVLWKHVRL). Over 26-580 (REHAATLEEE…PFADVLVCNT (555 aa)) the chain is Lumenal. N-linked (GlcNAc...) asparagine glycosylation is found at Asn-99 and Asn-276. The Fibronectin type-III domain maps to 488–580 (ARCQASVHGA…PFADVLVCNT (93 aa)).

The protein belongs to the glycosyltransferase 61 family. In terms of tissue distribution, highly expressed in the brain, muscle, heart, and kidney in both fetus and adult. In the brain, highest expression in the cortex and cerebellum. Highly expressed in the pancreas.

It is found in the endoplasmic reticulum membrane. It carries out the reaction 3-O-(alpha-D-mannosyl)-L-threonyl-[protein] + UDP-N-acetyl-alpha-D-glucosamine = 3-O-(N-acetyl-beta-D-glucosaminyl-(1-&gt;4)-alpha-D-mannosyl)-L-threonyl-[protein] + UDP + H(+). The protein operates within protein modification; protein glycosylation. Its function is as follows. O-linked mannose beta-1,4-N-acetylglucosaminyltransferase that transfers UDP-N-acetyl-D-glucosamine to the 4-position of the mannose to generate N-acetyl-D-glucosamine-beta-1,4-O-D-mannosylprotein. Involved in the biosynthesis of the phosphorylated O-mannosyl trisaccharide (N-acetylgalactosamine-beta-3-N-acetylglucosamine-beta-4-(phosphate-6-)mannose), a carbohydrate structure present in alpha-dystroglycan (DAG1), which is required for binding laminin G-like domain-containing extracellular proteins with high affinity. The sequence is that of Protein O-linked-mannose beta-1,4-N-acetylglucosaminyltransferase 2 (POMGNT2) from Homo sapiens (Human).